Consider the following 112-residue polypeptide: Large ribosomal subunit protein uL22 (112 aa).

This sequence belongs to the universal ribosomal protein uL22 family. As to quaternary structure, part of the 50S ribosomal subunit.

This protein binds specifically to 23S rRNA; its binding is stimulated by other ribosomal proteins, e.g. L4, L17, and L20. It is important during the early stages of 50S assembly. It makes multiple contacts with different domains of the 23S rRNA in the assembled 50S subunit and ribosome. Its function is as follows. The globular domain of the protein is located near the polypeptide exit tunnel on the outside of the subunit, while an extended beta-hairpin is found that lines the wall of the exit tunnel in the center of the 70S ribosome. The polypeptide is Large ribosomal subunit protein uL22 (Mesoplasma florum (strain ATCC 33453 / NBRC 100688 / NCTC 11704 / L1) (Acholeplasma florum)).